The chain runs to 163 residues: Phosphopantetheine adenylyltransferase (163 aa).

Threonine 10 serves as a coordination point for substrate. ATP contacts are provided by residues 10-11 (TF) and histidine 18. Substrate-binding residues include lysine 42, leucine 75, and arginine 89. ATP contacts are provided by residues 90–92 (GVR), glutamate 100, and 125–131 (YTYVASS).

This sequence belongs to the bacterial CoaD family. In terms of assembly, homohexamer. Mg(2+) serves as cofactor.

It localises to the cytoplasm. The catalysed reaction is (R)-4'-phosphopantetheine + ATP + H(+) = 3'-dephospho-CoA + diphosphate. The protein operates within cofactor biosynthesis; coenzyme A biosynthesis; CoA from (R)-pantothenate: step 4/5. Reversibly transfers an adenylyl group from ATP to 4'-phosphopantetheine, yielding dephospho-CoA (dPCoA) and pyrophosphate. This is Phosphopantetheine adenylyltransferase from Pelodictyon phaeoclathratiforme (strain DSM 5477 / BU-1).